The chain runs to 208 residues: Putative archaetidylserine decarboxylase proenzyme (208 aa).

Ser172 serves as the catalytic Schiff-base intermediate with substrate; via pyruvic acid. Position 172 is a pyruvic acid (Ser); by autocatalysis (Ser172).

It belongs to the phosphatidylserine decarboxylase family. PSD-A subfamily. As to quaternary structure, heterodimer of a large membrane-associated beta subunit and a small pyruvoyl-containing alpha subunit. The cofactor is pyruvate. Post-translationally, is synthesized initially as an inactive proenzyme. Formation of the active enzyme involves a self-maturation process in which the active site pyruvoyl group is generated from an internal serine residue via an autocatalytic post-translational modification. Two non-identical subunits are generated from the proenzyme in this reaction, and the pyruvate is formed at the N-terminus of the alpha chain, which is derived from the carboxyl end of the proenzyme. The post-translation cleavage follows an unusual pathway, termed non-hydrolytic serinolysis, in which the side chain hydroxyl group of the serine supplies its oxygen atom to form the C-terminus of the beta chain, while the remainder of the serine residue undergoes an oxidative deamination to produce ammonia and the pyruvoyl prosthetic group on the alpha chain.

It localises to the cell membrane. The catalysed reaction is archaetidylserine + H(+) = archaetidylethanolamine + CO2. Catalyzes the formation of archaetidylethanolamine (PtdEtn) from archaetidylserine (PtdSer). The sequence is that of Putative archaetidylserine decarboxylase proenzyme from Methanosarcina acetivorans (strain ATCC 35395 / DSM 2834 / JCM 12185 / C2A).